The following is a 595-amino-acid chain: Arginine--tRNA ligase (595 aa).

The 'HIGH' region signature appears at 132-142 (ANPTGPLHVGH).

This sequence belongs to the class-I aminoacyl-tRNA synthetase family. As to quaternary structure, monomer.

It localises to the cytoplasm. It carries out the reaction tRNA(Arg) + L-arginine + ATP = L-arginyl-tRNA(Arg) + AMP + diphosphate. The protein is Arginine--tRNA ligase of Cupriavidus necator (strain ATCC 17699 / DSM 428 / KCTC 22496 / NCIMB 10442 / H16 / Stanier 337) (Ralstonia eutropha).